Reading from the N-terminus, the 117-residue chain is Aspartate 1-decarboxylase (117 aa).

Ser-25 acts as the Schiff-base intermediate with substrate; via pyruvic acid in catalysis. Ser-25 is modified (pyruvic acid (Ser)). Thr-57 is a substrate binding site. Tyr-58 acts as the Proton donor in catalysis. 73 to 75 (GAA) is a binding site for substrate.

Belongs to the PanD family. In terms of assembly, heterooctamer of four alpha and four beta subunits. The cofactor is pyruvate. In terms of processing, is synthesized initially as an inactive proenzyme, which is activated by self-cleavage at a specific serine bond to produce a beta-subunit with a hydroxyl group at its C-terminus and an alpha-subunit with a pyruvoyl group at its N-terminus.

The protein localises to the cytoplasm. It catalyses the reaction L-aspartate + H(+) = beta-alanine + CO2. Its pathway is cofactor biosynthesis; (R)-pantothenate biosynthesis; beta-alanine from L-aspartate: step 1/1. Functionally, catalyzes the pyruvoyl-dependent decarboxylation of aspartate to produce beta-alanine. In Thermoanaerobacter pseudethanolicus (strain ATCC 33223 / 39E) (Clostridium thermohydrosulfuricum), this protein is Aspartate 1-decarboxylase.